We begin with the raw amino-acid sequence, 88 residues long: Cell division topological specificity factor (88 aa).

This sequence belongs to the MinE family.

Functionally, prevents the cell division inhibition by proteins MinC and MinD at internal division sites while permitting inhibition at polar sites. This ensures cell division at the proper site by restricting the formation of a division septum at the midpoint of the long axis of the cell. This is Cell division topological specificity factor from Clostridium botulinum (strain Alaska E43 / Type E3).